The following is a 525-amino-acid chain: GMP synthase [glutamine-hydrolyzing] (525 aa).

The Glutamine amidotransferase type-1 domain occupies 8 to 207 (KILILDFGSQ…ALDICQCEAN (200 aa)). Cys85 functions as the Nucleophile in the catalytic mechanism. Active-site residues include His181 and Glu183. Residues 208–400 (WKPSSIIEDA…LGLPYNMLYR (193 aa)) form the GMPS ATP-PPase domain. 235-241 (SGGVDSS) serves as a coordination point for ATP.

Homodimer.

The catalysed reaction is XMP + L-glutamine + ATP + H2O = GMP + L-glutamate + AMP + diphosphate + 2 H(+). It functions in the pathway purine metabolism; GMP biosynthesis; GMP from XMP (L-Gln route): step 1/1. In terms of biological role, catalyzes the synthesis of GMP from XMP. The protein is GMP synthase [glutamine-hydrolyzing] of Shewanella loihica (strain ATCC BAA-1088 / PV-4).